Consider the following 452-residue polypeptide: Tylactone mycaminosyltransferase (452 aa).

Basic and acidic residues predominate over residues 1-16; the sequence is MRRALDDRRRGPHGPE. The tract at residues 1-20 is disordered; sequence MRRALDDRRRGPHGPEGKPP.

It belongs to the glycosyltransferase 28 family.

It catalyses the reaction tylactone + dTDP-alpha-D-mycaminose = 5-O-beta-D-mycaminosyltylactone + dTDP + H(+). The protein operates within antibiotic biosynthesis; tylosin biosynthesis. The activity of TylM2 is substantially increased by the addition of the accessory protein TylM3. In terms of biological role, involved in the biosynthesis of the macrolide antibiotic tylosin derived from the polyketide lactone tylactone. Catalyzes the transfer of alpha-D-mycaminosyl from dTDP-alpha-D-mycaminose to the 5-hydroxyl group of tylactone to yield 5-O-mycaminosytylactone. It can also accept 16-membered tylactone and 12-membered ring macrolide. The sequence is that of Tylactone mycaminosyltransferase from Streptomyces fradiae (Streptomyces roseoflavus).